A 104-amino-acid chain; its full sequence is Integration host factor subunit alpha (104 aa).

This sequence belongs to the bacterial histone-like protein family. As to quaternary structure, heterodimer of an alpha and a beta chain.

In terms of biological role, this protein is one of the two subunits of integration host factor, a specific DNA-binding protein that functions in genetic recombination as well as in transcriptional and translational control. This is Integration host factor subunit alpha from Methylobacterium sp. (strain 4-46).